The following is a 375-amino-acid chain: MAKADFYETLGVAKSADEKELKSAFRKLAMKYHPDKNPDDKEAERKFKEINEAYEMLKDPQKRAAYDRYGHAAFEHGGMGGGGGGFAGGGFSDIFEDIFGEMMGGGRGRQRSAGGRERGADLRYNMEITLEEAFSGKTAQIRVPTSITCDVCSGSGAKPGTQPKNCGTCQGTGRVRAAQGFFSIERTCPTCHGRGQIIPDPCPKCHGQGRVTEERSLSVNIPAGIEDGTRIRLQGEGEAGTRGGPAGDLYIFLSVKPHEFYQRDGADLYCAVPISMTTAALGGTFDVATLDGTKSRVSVPEGTQAGKQFRLKGKGMPVLRSAQTGDLYIQIQIETPQKLTKRQRELLQEFEQISSKENNPESTGFFARMKEFFEG.

The J domain occupies 5 to 70 (DFYETLGVAK…QKRAAYDRYG (66 aa)). The segment at 136-214 (GKTAQIRVPT…CHGQGRVTEE (79 aa)) adopts a CR-type zinc-finger fold. The Zn(2+) site is built by Cys149, Cys152, Cys166, Cys169, Cys188, Cys191, Cys202, and Cys205. 4 CXXCXGXG motif repeats span residues 149–156 (CDVCSGSG), 166–173 (CGTCQGTG), 188–195 (CPTCHGRG), and 202–209 (CPKCHGQG).

Belongs to the DnaJ family. Homodimer. Zn(2+) serves as cofactor.

It is found in the cytoplasm. Functionally, participates actively in the response to hyperosmotic and heat shock by preventing the aggregation of stress-denatured proteins and by disaggregating proteins, also in an autonomous, DnaK-independent fashion. Unfolded proteins bind initially to DnaJ; upon interaction with the DnaJ-bound protein, DnaK hydrolyzes its bound ATP, resulting in the formation of a stable complex. GrpE releases ADP from DnaK; ATP binding to DnaK triggers the release of the substrate protein, thus completing the reaction cycle. Several rounds of ATP-dependent interactions between DnaJ, DnaK and GrpE are required for fully efficient folding. Also involved, together with DnaK and GrpE, in the DNA replication of plasmids through activation of initiation proteins. The sequence is that of Chaperone protein DnaJ from Rhizobium etli (strain ATCC 51251 / DSM 11541 / JCM 21823 / NBRC 15573 / CFN 42).